The chain runs to 438 residues: Aspartate--tRNA(Asp) ligase (438 aa).

Glu-170 is an L-aspartate binding site. Residues 192 to 195 form an aspartate region; the sequence is QLYK. Arg-214 lines the L-aspartate pocket. Residues 214–216, 222–224, and Glu-361 contribute to the ATP site; these read RAE and RHL. Residues Glu-361 and Ser-364 each coordinate Mg(2+). L-aspartate contacts are provided by Ser-364 and Arg-368. ATP is bound at residue 409–412; that stretch reads GAER.

This sequence belongs to the class-II aminoacyl-tRNA synthetase family. Type 2 subfamily. As to quaternary structure, homodimer. Mg(2+) serves as cofactor.

It localises to the cytoplasm. It catalyses the reaction tRNA(Asp) + L-aspartate + ATP = L-aspartyl-tRNA(Asp) + AMP + diphosphate. Functionally, catalyzes the attachment of L-aspartate to tRNA(Asp) in a two-step reaction: L-aspartate is first activated by ATP to form Asp-AMP and then transferred to the acceptor end of tRNA(Asp). This Pyrococcus horikoshii (strain ATCC 700860 / DSM 12428 / JCM 9974 / NBRC 100139 / OT-3) protein is Aspartate--tRNA(Asp) ligase.